The sequence spans 144 residues: Ferredoxin-thioredoxin reductase catalytic chain, chloroplastic (144 aa).

Residues 1-31 (MTTQASTFAVAVPSVATPFRRHRNPFVVRAQ) constitute a chloroplast transit peptide. Cys83 lines the [4Fe-4S] cluster pocket. Residue Cys85 is the Nucleophile of the active site. Cys85 and Cys115 are joined by a disulfide. Residues Cys102, Cys104, and Cys113 each contribute to the [4Fe-4S] cluster site.

The protein belongs to the ferredoxin thioredoxin reductase beta subunit family. As to quaternary structure, heterodimer of subunit A (variable subunit) and subunit B (catalytic subunit). Heterodimeric FTR forms a complex with ferredoxin and thioredoxin. Requires [4Fe-4S] cluster as cofactor.

Its subcellular location is the plastid. The protein localises to the chloroplast. The catalysed reaction is [thioredoxin]-disulfide + 2 reduced [2Fe-2S]-[ferredoxin] + 2 H(+) = [thioredoxin]-dithiol + 2 oxidized [2Fe-2S]-[ferredoxin]. Functionally, catalytic subunit of the ferredoxin-thioredoxin reductase (FTR), which catalyzes the two-electron reduction of thioredoxins by the electrons provided by reduced ferredoxin. This is Ferredoxin-thioredoxin reductase catalytic chain, chloroplastic (FTRC) from Glycine max (Soybean).